Here is a 515-residue protein sequence, read N- to C-terminus: Serine/threonine-protein kinase STE7 (515 aa).

The Protein kinase domain maps to Leu-191–Ile-466. Residues Ile-197 to Val-205 and Lys-220 each bind ATP. The Proton acceptor role is filled by Asp-331. Ser-359 carries the post-translational modification Phosphoserine. The residue at position 363 (Thr-363) is a Phosphothreonine.

This sequence belongs to the protein kinase superfamily. STE Ser/Thr protein kinase family. MAP kinase kinase subfamily.

The catalysed reaction is L-seryl-[protein] + ATP = O-phospho-L-seryl-[protein] + ADP + H(+). It catalyses the reaction L-threonyl-[protein] + ATP = O-phospho-L-threonyl-[protein] + ADP + H(+). The enzyme catalyses L-tyrosyl-[protein] + ATP = O-phospho-L-tyrosyl-[protein] + ADP + H(+). Phosphorylated at multiple sites in response to pheromone. Functionally, serine/threonine protein kinase required for cell-type-specific transcription and signal transduction in yeast. It is thought that it is phosphorylated by the ste11 protein kinase and that it can phosphorylate the FUS3 and or KSS1 kinases. The sequence is that of Serine/threonine-protein kinase STE7 (STE7) from Saccharomyces cerevisiae (strain ATCC 204508 / S288c) (Baker's yeast).